We begin with the raw amino-acid sequence, 744 residues long: Dual specificity protein kinase shkD (744 aa).

Positions 1-276 (MKRFFSNLFK…SGPPEILPEE (276 aa)) are disordered. Low complexity-rich tracts occupy residues 25–70 (PTTS…NSNQ), 79–107 (SPST…SFTP), and 127–200 (TSTT…QTAS). Residues 201-210 (VNHTSSDQSL) show a composition bias toward polar residues. The span at 211-236 (NAQNVTQTNNNNNNNNNNNNNNNANN) shows a compositional bias: low complexity. The region spanning 277 to 534 (IDRTDFLGQG…EILFRLNEIL (258 aa)) is the Protein kinase domain. ATP contacts are provided by residues 283-291 (LGQGSFGSV) and Lys-304. Catalysis depends on Asp-400, which acts as the Proton acceptor. The SH2 domain occupies 641–734 (WFHGDIVREQ…LVPCPKFTQE (94 aa)).

This sequence belongs to the protein kinase superfamily. Ser/Thr protein kinase family. SH2 domain-containing protein kinase subfamily.

It is found in the membrane. It carries out the reaction L-seryl-[protein] + ATP = O-phospho-L-seryl-[protein] + ADP + H(+). The catalysed reaction is L-threonyl-[protein] + ATP = O-phospho-L-threonyl-[protein] + ADP + H(+). Required for proper chemotaxis and phagocytosis; proper spatiotemporal control of F-actin levels in chemotaxing cells. Negative regulator of the PI3K (phosphatidylinositol 3 kinase) pathway. Predominantly phosphorylates serines and threonines and tyrosines at a lower level. This chain is Dual specificity protein kinase shkD (shkD), found in Dictyostelium discoideum (Social amoeba).